The sequence spans 465 residues: VGFKAGVKDYKLTYYTPEYETKDTDILAAFRVTPQPGVPAEEAGAAVAAESSTGTWTTVWTDGLTSLDRYKGRCYHIEPVAGEEDQFIAYVAYPLDLFEEGSVTNMFTSIVGNVFGFKALRALRLEDLRIPPSYIKTFQGPPHGIQVERDKLNKYGRPLLGCTIKPKLGLSAKNYGRAVYECLRGGLDFTKDDENVNSQPFMRWRDRFLFCAEAIYKAQAETGEIKGHYLNATAGTCEEMIKRAVFARELGVPIVMHDYLTGGFTANTSLAHYCRDNGLLLHIHRAMHAVIDRQKNHGMHFRVLAKALRLSGGDHIHAGTVVGKLEGEREITLGFVDLLRDDFVEKDRSRGIYFTQDWVSTPGVLPVASGGIHVWHMPALTEIFGDDSVLQFGGGTLGHPWGNAPGAVANRVALEACVRARNEGRDLAREGNEIIREASKWSLELAAACEVWKEIKFNWQAVDTI.

The residue at position 4 (Lys4) is an N6,N6,N6-trimethyllysine. Substrate is bound by residues Asn113 and Thr163. Catalysis depends on Lys165, which acts as the Proton acceptor. Lys167 contributes to the substrate binding site. Positions 191, 193, and 194 each coordinate Mg(2+). Position 191 is an N6-carboxylysine (Lys191). His284 (proton acceptor) is an active-site residue. Substrate is bound by residues Arg285, His317, and Ser369.

The protein belongs to the RuBisCO large chain family. Type I subfamily. Heterohexadecamer of 8 large chains and 8 small chains; disulfide-linked. The disulfide link is formed within the large subunit homodimers. Mg(2+) serves as cofactor. Post-translationally, the disulfide bond which can form in the large chain dimeric partners within the hexadecamer appears to be associated with oxidative stress and protein turnover.

The protein resides in the plastid. It localises to the chloroplast. The enzyme catalyses 2 (2R)-3-phosphoglycerate + 2 H(+) = D-ribulose 1,5-bisphosphate + CO2 + H2O. It carries out the reaction D-ribulose 1,5-bisphosphate + O2 = 2-phosphoglycolate + (2R)-3-phosphoglycerate + 2 H(+). In terms of biological role, ruBisCO catalyzes two reactions: the carboxylation of D-ribulose 1,5-bisphosphate, the primary event in carbon dioxide fixation, as well as the oxidative fragmentation of the pentose substrate in the photorespiration process. Both reactions occur simultaneously and in competition at the same active site. The polypeptide is Ribulose bisphosphate carboxylase large chain (Securidaca diversifolia (Easter flower)).